We begin with the raw amino-acid sequence, 64 residues long: Alpha-conotoxin SI (64 aa).

Positions M1–S21 are cleaved as a signal peptide. Positions F22–E49 are excised as a propeptide. Positions P23–R47 are disordered. Residues R26–R47 show a composition bias toward basic and acidic residues. 2 disulfides stabilise this stretch: C51/C56 and C52/C62. Position 62 is a cysteine amide (C62).

The protein belongs to the conotoxin A superfamily. In terms of tissue distribution, expressed by the venom duct.

It localises to the secreted. Its function is as follows. Alpha-conotoxins act on postsynaptic membranes, they bind to the nicotinic acetylcholine receptors (nAChR) and thus inhibit them. Is active on muscle nAChR (IC(50)=113 nM on adult subtype (alpha-1-beta-1-gamma-delta/CHRNA1-CHRNB1-CHRNG-CHRND) and IC(50)=142 nM on fetal subtype (alpha-1-beta-1-delta-epsilon/CHRNA1-CHRNB1-CHRND-CHRNE)). On mice muscle receptors, its higher affinity site is the alpha/delta nAChR subunit interface. On Torpedo receptors, it does not distinguish between alpha/delta and alpha/gamma acetylcholine-binding sites. In vivo, causes paralysis followed by death when injected into goldfish. In contrast, has no effect on mice, when similar doses are intraperitoneally or intracerebrally injected. This Conus striatus (Striated cone) protein is Alpha-conotoxin SI.